Consider the following 257-residue polypeptide: Large ribosomal subunit protein uL2 (257 aa).

A disordered region spans residues 207–257; that stretch reads VDHPHGGGNHQHVGHPTTLKRSSPPGQKAGKVAARRTGLIRGGNKEGAADN.

It belongs to the universal ribosomal protein uL2 family. In terms of assembly, component of the large ribosomal subunit.

The protein localises to the cytoplasm. In terms of biological role, component of the large ribosomal subunit. The ribosome is a large ribonucleoprotein complex responsible for the synthesis of proteins in the cell. This chain is Large ribosomal subunit protein uL2 (RPL8), found in Entamoeba histolytica (strain ATCC 30459 / HM-1:IMSS / ABRM).